Here is a 321-residue protein sequence, read N- to C-terminus: Biotin synthase (321 aa).

Residues 37-264 enclose the Radical SAM core domain; it reads RDMELCTLSS…TSVIRLSAGR (228 aa). [4Fe-4S] cluster-binding residues include Cys-52, Cys-56, and Cys-59. [2Fe-2S] cluster contacts are provided by Cys-96, Cys-127, Cys-187, and Arg-259.

The protein belongs to the radical SAM superfamily. Biotin synthase family. As to quaternary structure, homodimer. [4Fe-4S] cluster serves as cofactor. Requires [2Fe-2S] cluster as cofactor.

It carries out the reaction (4R,5S)-dethiobiotin + (sulfur carrier)-SH + 2 reduced [2Fe-2S]-[ferredoxin] + 2 S-adenosyl-L-methionine = (sulfur carrier)-H + biotin + 2 5'-deoxyadenosine + 2 L-methionine + 2 oxidized [2Fe-2S]-[ferredoxin]. It participates in cofactor biosynthesis; biotin biosynthesis; biotin from 7,8-diaminononanoate: step 2/2. Its function is as follows. Catalyzes the conversion of dethiobiotin (DTB) to biotin by the insertion of a sulfur atom into dethiobiotin via a radical-based mechanism. The polypeptide is Biotin synthase (Coxiella burnetii (strain CbuK_Q154) (Coxiella burnetii (strain Q154))).